The chain runs to 93 residues: Small ribosomal subunit protein uS19 (93 aa).

Belongs to the universal ribosomal protein uS19 family.

Functionally, protein S19 forms a complex with S13 that binds strongly to the 16S ribosomal RNA. The sequence is that of Small ribosomal subunit protein uS19 from Wolinella succinogenes (strain ATCC 29543 / DSM 1740 / CCUG 13145 / JCM 31913 / LMG 7466 / NCTC 11488 / FDC 602W) (Vibrio succinogenes).